The chain runs to 589 residues: Transcription factor atf-6 homolog (589 aa).

The segment covering 1–16 (MNFDNTVHESNFDDLL) has biased composition (basic and acidic residues). Residues 1-82 (MNFDNTVHES…SSPPLSCANF (82 aa)) are disordered. Low complexity-rich tracts occupy residues 36–54 (GTDESQESTSSSSFGFSDQ) and 67–78 (GDSSSDSSPPLS). The region spanning 250–299 (QNRKIRNRMYAQASRMRKKEADEHMKMNLQELLQENEILRTENAALKQRL) is the bZIP domain. The tract at residues 252-275 (RKIRNRMYAQASRMRKKEADEHMK) is basic motif. A coiled-coil region spans residues 271-305 (DEHMKMNLQELLQENEILRTENAALKQRLAFFEHE). A leucine-zipper region spans residues 281-295 (LLQENEILRTENAAL). Residues 324–344 (IIAAGSVLMMFGLFAVISPFN) traverse the membrane as a helical segment.

The protein belongs to the bZIP family. ATF subfamily.

It localises to the nucleus. The protein resides in the membrane. Functionally, transcription factor. Plays a role in the unfolded protein response (UPR), perhaps mainly during constitutive endoplasmic reticulum (ER) stress, by activating transcription of genes involved in the UPR. Plays a role in modulating lifespan, acting by positively regulating expression of calcium-binding chaperone crt-1, thereby influencing ER calcium homeostasis. By activating the UPR pathway, confers adaptive protection to subsequent exposure to hypoxia. Involved in protection against proteotoxicity, probably acting via the UPR. Probably acts in the UPR in parallel with the ire-1-xbp-1 and pek-1 pathways. May be regulated by endopeptidase S2P-mediated proteolytic cleavage. The polypeptide is Transcription factor atf-6 homolog (Caenorhabditis elegans).